The chain runs to 68 residues: Protein transport protein Sec61 gamma-1 subunit (68 aa).

The Cytoplasmic segment spans residues 1–32 (MDKVVKFAEPGRAFAKDSIRLVKRCTKPDRKE). The helical transmembrane segment at 33–61 (FQKIAIATAVGFAIMGFIGFFVKLIHIPI) threads the bilayer. Topologically, residues 62–68 (NNIIVGS) are extracellular.

The protein belongs to the SecE/SEC61-gamma family. In terms of assembly, heterotrimeric complex composed of SEC61-alpha, SEC61-beta and SEC61-gamma.

It is found in the endoplasmic reticulum membrane. In terms of biological role, necessary for protein translocation in the endoplasmic reticulum. The polypeptide is Protein transport protein Sec61 gamma-1 subunit (SEC61G1) (Drosophila melanogaster (Fruit fly)).